The following is a 141-amino-acid chain: Hemoglobin subunit alpha (141 aa).

Residues 1–141 form the Globin domain; the sequence is VLSPADKTNV…VSTVLTSKYR (141 aa). S3 is modified (phosphoserine). K7 carries the N6-succinyllysine modification. T8 bears the Phosphothreonine mark. K11 carries the post-translational modification N6-succinyllysine. K16 carries the N6-acetyllysine; alternate modification. At K16 the chain carries N6-succinyllysine; alternate. The residue at position 24 (Y24) is a Phosphotyrosine. S35 is modified (phosphoserine). N6-succinyllysine is present on K40. A Phosphoserine modification is found at S49. H58 serves as a coordination point for O2. A heme b-binding site is contributed by H87. At S102 the chain carries Phosphoserine. The residue at position 108 (T108) is a Phosphothreonine. A phosphoserine mark is found at S124 and S131. Phosphothreonine is present on residues T134 and T137. S138 carries the phosphoserine modification.

Belongs to the globin family. In terms of assembly, heterotetramer of two alpha chains and two beta chains. In terms of tissue distribution, red blood cells.

Its function is as follows. Involved in oxygen transport from the lung to the various peripheral tissues. Functionally, hemopressin acts as an antagonist peptide of the cannabinoid receptor CNR1. Hemopressin-binding efficiently blocks cannabinoid receptor CNR1 and subsequent signaling. The protein is Hemoglobin subunit alpha (HBA) of Urocitellus parryii (Arctic ground squirrel).